Here is a 2290-residue protein sequence, read N- to C-terminus: Protein Ycf2 (2290 aa).

1644–1651 (GSIGTGRS) contacts ATP.

Belongs to the Ycf2 family.

The protein localises to the plastid. It is found in the chloroplast stroma. Its function is as follows. Probable ATPase of unknown function. Its presence in a non-photosynthetic plant (Epifagus virginiana) and experiments in tobacco indicate that it has an essential function which is probably not related to photosynthesis. The protein is Protein Ycf2 of Nasturtium officinale (Watercress).